The following is a 218-amino-acid chain: Cytochrome b6 (218 aa).

Residues 35–55 (IFYCLGGITLVCFLIQFATGF) traverse the membrane as a helical segment. C38 contributes to the heme c binding site. Residues H89 and H103 each coordinate heme b. Helical transmembrane passes span 93–113 (ASMM…TGGF), 119–139 (LTWV…VTGY), and 189–209 (LHTF…FLMI). Heme b-binding residues include H190 and H205.

This sequence belongs to the cytochrome b family. PetB subfamily. The 4 large subunits of the cytochrome b6-f complex are cytochrome b6, subunit IV (17 kDa polypeptide, PetD), cytochrome f and the Rieske protein, while the 4 small subunits are PetG, PetL, PetM and PetN. The complex functions as a dimer. Requires heme b as cofactor. Heme c serves as cofactor.

The protein localises to the cellular thylakoid membrane. Functionally, component of the cytochrome b6-f complex, which mediates electron transfer between photosystem II (PSII) and photosystem I (PSI), cyclic electron flow around PSI, and state transitions. The sequence is that of Cytochrome b6 from Synechococcus sp. (strain RCC307).